The primary structure comprises 150 residues: UPF0178 protein BceJ2315_16760 (150 aa).

It belongs to the UPF0178 family.

The polypeptide is UPF0178 protein BceJ2315_16760 (Burkholderia cenocepacia (strain ATCC BAA-245 / DSM 16553 / LMG 16656 / NCTC 13227 / J2315 / CF5610) (Burkholderia cepacia (strain J2315))).